The following is a 463-amino-acid chain: Hydroxyacid-oxoacid transhydrogenase, mitochondrial (463 aa).

This sequence belongs to the iron-containing alcohol dehydrogenase family. Hydroxyacid-oxoacid transhydrogenase subfamily.

It is found in the mitochondrion. It carries out the reaction (S)-3-hydroxybutanoate + 2-oxoglutarate = (R)-2-hydroxyglutarate + acetoacetate. The enzyme catalyses 4-hydroxybutanoate + 2-oxoglutarate = (R)-2-hydroxyglutarate + succinate semialdehyde. In terms of biological role, catalyzes the cofactor-independent reversible oxidation of gamma-hydroxybutyrate (GHB) to succinic semialdehyde (SSA) coupled to reduction of 2-ketoglutarate (2-KG) to D-2-hydroxyglutarate (D-2-HG). L-3-hydroxybutyrate (L-3-OHB) is also a substrate for HOT when using 2-KG as hydrogen acceptor, resulting in the formation of D-2-HG. This is Hydroxyacid-oxoacid transhydrogenase, mitochondrial (adhfe1) from Xenopus laevis (African clawed frog).